We begin with the raw amino-acid sequence, 591 residues long: MHAYRSHTCAELNAGHVGQEVRLSGWVHRVRDHGGVLFIDLRDHYGITQVIADADSPAFAELETVRAEWVIRIEGRVKGRDAALVNPKLATGEIEVYATGLTVLGAADELPMPVFGEVDYPEETRLTYRFLDLRREKLHANMMLRSNVVRSLRNRMWDAGFNEFQTPIITASSPEGARDFLVPSRLHPGKFYALPQAPQQFKQLIMVAGFDRYFQIAPCFRDEDPRADRSPTDFYQLDVEMSFVEQEDVFRAVQPVIRGIFEEFGGGRRVDADWPRIAYRDAMLWYGSDKPDLRNPIKMQVVSEHFRGSGFAIFAKLLENEGTEIRAIPAPTGGSRKFCDRMNAFAQSQGLPGMGYIFWRKGDDGAMEAAGPLAKNIGPERTEAIRQQLGLGEGDAAFFLGGKPETFEAVAGRARNEIGRELGLTEENCFRFAWIVDFPMYEKDDEGKVDFSHNPFSMPQGGMAALEGDPLKVLAYQYDLACNGYELISGGIRNHKPEIMFKAFELAGYPASEVEKRFGGMVKAFRYGAPPHGGCAAGIDRIVMLLADEANIREVIMFPMNQRAEDLLMGAPSEPTNEQLRELRLRVVPKD.

E175 provides a ligand contact to L-aspartate. Residues 199–202 (QQFK) form an aspartate region. Positions 221 and 453 each coordinate L-aspartate. 221 to 223 (RDE) lines the ATP pocket. E486 provides a ligand contact to ATP. L-aspartate is bound at residue R493. 538 to 541 (GIDR) is an ATP binding site.

Belongs to the class-II aminoacyl-tRNA synthetase family. Type 1 subfamily. In terms of assembly, homodimer.

The protein resides in the cytoplasm. It catalyses the reaction tRNA(Asx) + L-aspartate + ATP = L-aspartyl-tRNA(Asx) + AMP + diphosphate. Functionally, aspartyl-tRNA synthetase with relaxed tRNA specificity since it is able to aspartylate not only its cognate tRNA(Asp) but also tRNA(Asn). Reaction proceeds in two steps: L-aspartate is first activated by ATP to form Asp-AMP and then transferred to the acceptor end of tRNA(Asp/Asn). The chain is Aspartate--tRNA(Asp/Asn) ligase from Cereibacter sphaeroides (strain ATCC 17025 / ATH 2.4.3) (Rhodobacter sphaeroides).